A 145-amino-acid polypeptide reads, in one-letter code: Methylglyoxal synthase (145 aa).

The MGS-like domain maps to 1–145 (MNSKKKIALV…YYQKIRKDNF (145 aa)). Substrate is bound by residues His-12, Lys-16, 38 to 41 (TGTT), and 58 to 59 (SG). Asp-64 (proton donor/acceptor) is an active-site residue. His-91 serves as a coordination point for substrate.

Belongs to the methylglyoxal synthase family.

The catalysed reaction is dihydroxyacetone phosphate = methylglyoxal + phosphate. Its function is as follows. Catalyzes the formation of methylglyoxal from dihydroxyacetone phosphate. The polypeptide is Methylglyoxal synthase (Clostridium acetobutylicum (strain ATCC 824 / DSM 792 / JCM 1419 / IAM 19013 / LMG 5710 / NBRC 13948 / NRRL B-527 / VKM B-1787 / 2291 / W)).